Reading from the N-terminus, the 534-residue chain is Probable protein kinase UbiB (534 aa).

The helical transmembrane segment at 23–43 (DLLFDLPLPWFLLALRFALPW) threads the bilayer. A Protein kinase domain is found at 125-492 (RFDIEPLASA…WHKRKDDWFL (368 aa)). ATP-binding positions include 131 to 139 (LASASVAQV) and K153. Residue D288 is the Proton acceptor of the active site. Transmembrane regions (helical) follow at residues 490-510 (WFLR…AAGG) and 512-532 (LHEL…YLIV).

It belongs to the ABC1 family. UbiB subfamily.

It is found in the cell inner membrane. It functions in the pathway cofactor biosynthesis; ubiquinone biosynthesis [regulation]. In terms of biological role, is probably a protein kinase regulator of UbiI activity which is involved in aerobic coenzyme Q (ubiquinone) biosynthesis. The protein is Probable protein kinase UbiB of Pseudomonas fluorescens (strain ATCC BAA-477 / NRRL B-23932 / Pf-5).